A 104-amino-acid chain; its full sequence is Large ribosomal subunit protein bL21 (104 aa).

This sequence belongs to the bacterial ribosomal protein bL21 family. Part of the 50S ribosomal subunit. Contacts protein L20.

In terms of biological role, this protein binds to 23S rRNA in the presence of protein L20. The sequence is that of Large ribosomal subunit protein bL21 from Pseudomonas putida (strain GB-1).